Here is a 510-residue protein sequence, read N- to C-terminus: Probable cytosol aminopeptidase (510 aa).

Lys268 and Asp273 together coordinate Mn(2+). The active site involves Lys280. Asp291, Asp350, and Glu352 together coordinate Mn(2+). Arg354 is a catalytic residue.

Belongs to the peptidase M17 family. Requires Mn(2+) as cofactor.

It is found in the cytoplasm. It carries out the reaction Release of an N-terminal amino acid, Xaa-|-Yaa-, in which Xaa is preferably Leu, but may be other amino acids including Pro although not Arg or Lys, and Yaa may be Pro. Amino acid amides and methyl esters are also readily hydrolyzed, but rates on arylamides are exceedingly low.. It catalyses the reaction Release of an N-terminal amino acid, preferentially leucine, but not glutamic or aspartic acids.. In terms of biological role, presumably involved in the processing and regular turnover of intracellular proteins. Catalyzes the removal of unsubstituted N-terminal amino acids from various peptides. The sequence is that of Probable cytosol aminopeptidase from Micrococcus luteus (strain ATCC 4698 / DSM 20030 / JCM 1464 / CCM 169 / CCUG 5858 / IAM 1056 / NBRC 3333 / NCIMB 9278 / NCTC 2665 / VKM Ac-2230) (Micrococcus lysodeikticus).